Reading from the N-terminus, the 854-residue chain is Golgin subfamily A member 6-like protein 22 (854 aa).

Disordered stretches follow at residues 1 to 114, 320 to 348, 366 to 447, 481 to 568, 581 to 681, and 714 to 854; these read MLMW…HQEA, QEEK…MRRQ, MHEQ…MWRQ, QEEK…MWRQ, RQEE…EQEE, and QEEK…MQEH. The span at 15 to 35 shows a compositional bias: basic residues; sequence LPTHPHLPTHPHLPTHPHLPT. Over residues 45-66 the composition is skewed to basic and acidic residues; it reads MSKETRQSKLAEAKEQLTDHHP. 2 stretches are compositionally biased toward polar residues: residues 67–77 and 85–97; these read QTNPSVGTAAS and NNGT…TSGG. The segment covering 100 to 114 has biased composition (basic and acidic residues); sequence SPEDEQKASHQHQEA. The stretch at 103–854 forms a coiled coil; that stretch reads DEQKASHQHQ…RQQEEKMQEH (752 aa).

It belongs to the GOLGA6 family.

This is Golgin subfamily A member 6-like protein 22 from Homo sapiens (Human).